We begin with the raw amino-acid sequence, 135 residues long: NADPH-dependent 7-cyano-7-deazaguanine reductase (135 aa).

The active-site Thioimide intermediate is the cysteine 48. Aspartate 55 functions as the Proton donor in the catalytic mechanism. Residues 70 to 72 (IEL) and 89 to 90 (HE) contribute to the substrate site.

Belongs to the GTP cyclohydrolase I family. QueF type 1 subfamily.

It localises to the cytoplasm. It carries out the reaction 7-aminomethyl-7-carbaguanine + 2 NADP(+) = 7-cyano-7-deazaguanine + 2 NADPH + 3 H(+). Its pathway is tRNA modification; tRNA-queuosine biosynthesis. In terms of biological role, catalyzes the NADPH-dependent reduction of 7-cyano-7-deazaguanine (preQ0) to 7-aminomethyl-7-deazaguanine (preQ1). The polypeptide is NADPH-dependent 7-cyano-7-deazaguanine reductase (Prochlorococcus marinus (strain MIT 9313)).